A 507-amino-acid chain; its full sequence is Cytochrome P450 3A28 (507 aa).

Cysteine 442 contacts heme.

The protein belongs to the cytochrome P450 family. Requires heme as cofactor.

Its subcellular location is the endoplasmic reticulum membrane. It is found in the microsome membrane. It catalyses the reaction an organic molecule + reduced [NADPH--hemoprotein reductase] + O2 = an alcohol + oxidized [NADPH--hemoprotein reductase] + H2O + H(+). Its function is as follows. Cytochromes P450 are a group of heme-thiolate monooxygenases. In liver microsomes, this enzyme is involved in an NADPH-dependent electron transport pathway. It oxidizes a variety of structurally unrelated compounds, including steroids, fatty acids, and xenobiotics. The chain is Cytochrome P450 3A28 (CYP3A28) from Bos taurus (Bovine).